Here is an 89-residue protein sequence, read N- to C-terminus: Large ribosomal subunit protein bL27 (89 aa).

Residues 1–21 form a disordered region; it reads MAHKKAGGSSRNGRDSKGKRL.

Belongs to the bacterial ribosomal protein bL27 family.

The polypeptide is Large ribosomal subunit protein bL27 (Bradyrhizobium sp. (strain BTAi1 / ATCC BAA-1182)).